Reading from the N-terminus, the 182-residue chain is METTAFNTTSRIGNWSSAISPPLQTCGSFKCQLPTRRGVIVADLRNSNFRWRKATTTSRGNVAAEAVKIPTSVPVRVARELAQAGYRYLDVRTPDEFSIGHPTRAINVPYMYRVGSGMVKNPSFLRQVSSHFRKHDEIIIGCESGQMSFMASTDLLTAGFTAITDIAGGYVAWTENELPVEE.

The transit peptide at 1-65 (METTAFNTTS…TTSRGNVAAE (65 aa)) directs the protein to the chloroplast. The Rhodanese domain maps to 82 to 182 (AQAGYRYLDV…WTENELPVEE (101 aa)). The Cysteine persulfide intermediate role is filled by Cys142.

It is found in the plastid. The protein localises to the chloroplast. It localises to the thylakoid. In Arabidopsis thaliana (Mouse-ear cress), this protein is Rhodanese-like domain-containing protein 15, chloroplastic (STR15).